A 492-amino-acid chain; its full sequence is Ribose import ATP-binding protein RbsA (492 aa).

ABC transporter domains follow at residues 3–239 (IDMR…VGRK) and 238–492 (RKLE…TGGK). 35 to 42 (GENGAGKS) contributes to the ATP binding site.

This sequence belongs to the ABC transporter superfamily. Ribose importer (TC 3.A.1.2.1) family. As to quaternary structure, the complex is composed of an ATP-binding protein (RbsA), two transmembrane proteins (RbsC) and a solute-binding protein (RbsB).

It is found in the cell membrane. The enzyme catalyses D-ribose(out) + ATP + H2O = D-ribose(in) + ADP + phosphate + H(+). Part of the ABC transporter complex RbsABC involved in ribose import. Responsible for energy coupling to the transport system. The chain is Ribose import ATP-binding protein RbsA from Streptococcus agalactiae serotype III (strain NEM316).